Here is a 535-residue protein sequence, read N- to C-terminus: Zinc finger protein squeeze (535 aa).

Low complexity-rich tracts occupy residues 70-97 (MVMEQQPHPDQQQQQHLHHPQQQQHPPQ) and 131-142 (SSASGSGSNGSS). The disordered stretch occupies residues 70 to 157 (MVMEQQPHPD…RRGDGDQAKP (88 aa)). Residues 145–156 (EESRRGDGDQAK) are compositionally biased toward basic and acidic residues. 5 consecutive C2H2-type zinc fingers follow at residues 158–180 (YKCGSCSKSFANSSYLSQHTRIH), 186–208 (YRCEICQRKFTQLSHLQQHIRTH), 214–238 (YKCRHAGCPKAFSQLSNLQSHSRCH), 244–266 (FKCNSCYKCFSDEMTLLEHIPKH), and 275–297 (HICNLCGKSYTQETYLQKHLQKH). The residue at position 395 (T395) is a Phosphothreonine. A phosphoserine mark is found at S399 and S401. The interval 417 to 475 (TPQHHLQQQQQQQQQQQAQQQQQAQHQPSPGPGNSAFTPLSATVAPPPHLQQHRGPPGS) is disordered. Residues 419–443 (QHHLQQQQQQQQQQQAQQQQQAQHQ) are compositionally biased toward low complexity. S475 carries the phosphoserine modification. A phosphotyrosine mark is found at Y479 and Y481.

Belongs to the krueppel C2H2-type zinc-finger protein family. As to quaternary structure, interacts with nab; which acts as a coactivator. Interacts with ap. As to expression, largely restricted to subsets of cells in the CNS throughout embryonic and first instar larval (L1) development. Expressed in a population of lateral interneurons, primarily projecting axons in the anterior and posterior commissures. Overlaps with ap within the thoracic ap cluster. By stage 17, it is restricted to 2 neurons within the ap-cluster, with one neuron typically continuing to display higher levels of expression. Selectively expressed at higher levels within the FMRFa Tv neurons. Expressed in all leucokinergic cells.

It localises to the nucleus. Its function is as follows. Transcription factor involved in neuronal fate specification. First required in embryonic CNS development to define the number of cells that express apterous (ap) in the ap thoracic cluster of interneurons. Later on, it plays a central role in the combinatorial code of transcription factors that specifies the fate of the Tv neuron in the ap cluster by participating in the transcription regulation of FMRFa in Tv cells. Also required for projection neuron dendritic targeting. This Drosophila melanogaster (Fruit fly) protein is Zinc finger protein squeeze (sqz).